Here is a 202-residue protein sequence, read N- to C-terminus: Small ribosomal subunit protein uS3 (202 aa).

One can recognise a KH type-2 domain in the interval Leu18–Pro87.

This sequence belongs to the universal ribosomal protein uS3 family. As to quaternary structure, part of the 30S ribosomal subunit.

Binds the lower part of the 30S subunit head. The polypeptide is Small ribosomal subunit protein uS3 (Thermofilum pendens (strain DSM 2475 / Hrk 5)).